The chain runs to 523 residues: Probable 3-ketoacyl-CoA synthase 20 (523 aa).

2 consecutive transmembrane segments (helical) span residues 31 to 55 and 78 to 96; these read IVAV…AAGG and ALAV…YAAS. The FAE domain occupies 93-382; the sequence is YAASRPRPVY…RFLATVVLKR (290 aa). Residues cysteine 237, histidine 317, histidine 401, histidine 405, and asparagine 438 contribute to the active site.

The protein belongs to the thiolase-like superfamily. Chalcone/stilbene synthases family. In terms of tissue distribution, highly expressed in leaf sheaths. Expressed in leaves, flag leaves and panicles.

The protein localises to the membrane. The enzyme catalyses a very-long-chain acyl-CoA + malonyl-CoA + H(+) = a very-long-chain 3-oxoacyl-CoA + CO2 + CoA. Its function is as follows. Contributes to fatty acids elongation. Plays a role in controlling leaf anatomy and plant architecture. This Oryza sativa subsp. japonica (Rice) protein is Probable 3-ketoacyl-CoA synthase 20.